We begin with the raw amino-acid sequence, 384 residues long: Dual-specificity RNA methyltransferase RlmN (384 aa).

The active-site Proton acceptor is E105. One can recognise a Radical SAM core domain in the interval 111-350 (EDDRATLCVS…TIVRKTRGDD (240 aa)). C118 and C355 are oxidised to a cystine. Residues C125, C129, and C132 each coordinate [4Fe-4S] cluster. S-adenosyl-L-methionine contacts are provided by residues 179 to 180 (GE), S211, 233 to 235 (SLH), and N312. The active-site S-methylcysteine intermediate is C355.

This sequence belongs to the radical SAM superfamily. RlmN family. The cofactor is [4Fe-4S] cluster.

Its subcellular location is the cytoplasm. It carries out the reaction adenosine(2503) in 23S rRNA + 2 reduced [2Fe-2S]-[ferredoxin] + 2 S-adenosyl-L-methionine = 2-methyladenosine(2503) in 23S rRNA + 5'-deoxyadenosine + L-methionine + 2 oxidized [2Fe-2S]-[ferredoxin] + S-adenosyl-L-homocysteine. It catalyses the reaction adenosine(37) in tRNA + 2 reduced [2Fe-2S]-[ferredoxin] + 2 S-adenosyl-L-methionine = 2-methyladenosine(37) in tRNA + 5'-deoxyadenosine + L-methionine + 2 oxidized [2Fe-2S]-[ferredoxin] + S-adenosyl-L-homocysteine. Functionally, specifically methylates position 2 of adenine 2503 in 23S rRNA and position 2 of adenine 37 in tRNAs. m2A2503 modification seems to play a crucial role in the proofreading step occurring at the peptidyl transferase center and thus would serve to optimize ribosomal fidelity. This chain is Dual-specificity RNA methyltransferase RlmN, found in Shigella flexneri serotype 5b (strain 8401).